The primary structure comprises 207 residues: Metalloproteinase inhibitor 1 (207 aa).

An N-terminal signal peptide occupies residues 1–23 (MAPLAALASSMLLLLWLVAPSRA). Residue Cys24 participates in Zn(2+) binding. The interval 24-27 (CTCV) is involved in metalloproteinase-binding. Cystine bridges form between Cys24-Cys93, Cys26-Cys122, Cys36-Cys147, Cys150-Cys197, Cys155-Cys160, and Cys168-Cys189. The 124-residue stretch at 24–147 (CTCVPPHPQT…GFTKTYAAGC (124 aa)) folds into the NTR domain. An N-linked (GlcNAc...) asparagine glycan is attached at Asn53. The interval 90–91 (ES) is involved in metalloproteinase-binding. Asn101 carries an N-linked (GlcNAc...) asparagine glycan. Ser178 is modified (phosphoserine).

Belongs to the protease inhibitor I35 (TIMP) family. As to quaternary structure, interacts with MMP1, MMP3, MMP10 and MMP13, but has only very low affinity for MMP14. Interacts with CD63; identified in a complex with CD63 and ITGB1. In terms of processing, the activity of TIMP1 is dependent on the presence of disulfide bonds. Post-translationally, N-glycosylated.

The protein localises to the secreted. Metalloproteinase inhibitor that functions by forming one to one complexes with target metalloproteinases, such as collagenases, and irreversibly inactivates them by binding to their catalytic zinc cofactor. Acts on MMP1, MMP2, MMP3, MMP7, MMP8, MMP9, MMP10, MMP11, MMP12, MMP13 and MMP16. Does not act on MMP14. Also functions as a growth factor that regulates cell differentiation, migration and cell death and activates cellular signaling cascades via CD63 and ITGB1. Plays a role in integrin signaling. This chain is Metalloproteinase inhibitor 1 (TIMP1), found in Oryctolagus cuniculus (Rabbit).